We begin with the raw amino-acid sequence, 113 residues long: Large ribosomal subunit protein uL22 (113 aa).

The protein belongs to the universal ribosomal protein uL22 family. In terms of assembly, part of the 50S ribosomal subunit.

Functionally, this protein binds specifically to 23S rRNA; its binding is stimulated by other ribosomal proteins, e.g. L4, L17, and L20. It is important during the early stages of 50S assembly. It makes multiple contacts with different domains of the 23S rRNA in the assembled 50S subunit and ribosome. Its function is as follows. The globular domain of the protein is located near the polypeptide exit tunnel on the outside of the subunit, while an extended beta-hairpin is found that lines the wall of the exit tunnel in the center of the 70S ribosome. This is Large ribosomal subunit protein uL22 from Bacillus cereus (strain ATCC 10987 / NRS 248).